The following is a 506-amino-acid chain: Maturase K (506 aa).

This sequence belongs to the intron maturase 2 family. MatK subfamily.

The protein resides in the plastid. Its subcellular location is the chloroplast. Usually encoded in the trnK tRNA gene intron. Probably assists in splicing its own and other chloroplast group II introns. This Trifolium lupinaster (Lupine clover) protein is Maturase K.